The following is a 339-amino-acid chain: Phenylalanine--tRNA ligase alpha subunit (339 aa).

E250 is a binding site for Mg(2+).

It belongs to the class-II aminoacyl-tRNA synthetase family. Phe-tRNA synthetase alpha subunit type 1 subfamily. Tetramer of two alpha and two beta subunits. It depends on Mg(2+) as a cofactor.

The protein localises to the cytoplasm. The enzyme catalyses tRNA(Phe) + L-phenylalanine + ATP = L-phenylalanyl-tRNA(Phe) + AMP + diphosphate + H(+). This is Phenylalanine--tRNA ligase alpha subunit from Azobacteroides pseudotrichonymphae genomovar. CFP2.